The sequence spans 911 residues: DNA mismatch repair protein MutS (911 aa).

Position 660 to 667 (660 to 667) interacts with ATP; that stretch reads GPNMAGKS.

This sequence belongs to the DNA mismatch repair MutS family.

This protein is involved in the repair of mismatches in DNA. It is possible that it carries out the mismatch recognition step. This protein has a weak ATPase activity. This chain is DNA mismatch repair protein MutS, found in Rhodopseudomonas palustris (strain HaA2).